Here is a 229-residue protein sequence, read N- to C-terminus: 7-cyano-7-deazaguanine synthase (229 aa).

7–17 (LSGGLDSTTVL) contributes to the ATP binding site. Positions 191, 204, 207, and 210 each coordinate Zn(2+).

Belongs to the QueC family. Zn(2+) serves as cofactor.

The catalysed reaction is 7-carboxy-7-deazaguanine + NH4(+) + ATP = 7-cyano-7-deazaguanine + ADP + phosphate + H2O + H(+). It participates in purine metabolism; 7-cyano-7-deazaguanine biosynthesis. Catalyzes the ATP-dependent conversion of 7-carboxy-7-deazaguanine (CDG) to 7-cyano-7-deazaguanine (preQ(0)). The sequence is that of 7-cyano-7-deazaguanine synthase from Cyanothece sp. (strain PCC 7425 / ATCC 29141).